The chain runs to 189 residues: 3-isopropylmalate dehydratase small subunit (189 aa).

It belongs to the LeuD family. LeuD type 1 subfamily. In terms of assembly, heterodimer of LeuC and LeuD.

It catalyses the reaction (2R,3S)-3-isopropylmalate = (2S)-2-isopropylmalate. It functions in the pathway amino-acid biosynthesis; L-leucine biosynthesis; L-leucine from 3-methyl-2-oxobutanoate: step 2/4. In terms of biological role, catalyzes the isomerization between 2-isopropylmalate and 3-isopropylmalate, via the formation of 2-isopropylmaleate. This is 3-isopropylmalate dehydratase small subunit from Staphylococcus epidermidis (strain ATCC 35984 / DSM 28319 / BCRC 17069 / CCUG 31568 / BM 3577 / RP62A).